The primary structure comprises 496 residues: Glycine receptor subunit beta (496 aa).

Positions 1 to 22 (MKFSLAVSFFILMSLLFEDACS) are cleaved as a signal peptide. Residues 23-268 (KEKSSKKGKG…IFTLRRQVGF (246 aa)) are Extracellular-facing. Asparagine 54 carries an N-linked (GlcNAc...) asparagine glycan. The glycine site is built by arginine 108 and serine 174. Residues cysteine 183 and cysteine 197 are joined by a disulfide bond. Asparagine 242 carries an N-linked (GlcNAc...) asparagine glycan. Cysteines 243 and 255 form a disulfide. A glycine-binding site is contributed by threonine 250. Residues 269–289 (YMMGVYAPTLLIVVLSWLSFW) traverse the membrane as a helical segment. Topologically, residues 290-294 (INPDA) are cytoplasmic. A helical transmembrane segment spans residues 295–315 (SAARVPLGIFSVLSLASECTT). Over 316–327 (LAAELPKVSYVK) the chain is Extracellular. The helical transmembrane segment at 328-349 (ALDVWLIACLLFGFASLVEYAV) threads the bilayer. Residues 350–471 (VQVMLNNPKR…KPVIPTAAKR (122 aa)) lie on the Cytoplasmic side of the membrane. Threonine 391 is modified (phosphothreonine). A helical membrane pass occupies residues 472 to 495 (IDLYARALFPFCFLFFNVIYWSIY). Position 496 (leucine 496) is a topological domain, extracellular.

This sequence belongs to the ligand-gated ion channel (TC 1.A.9) family. Glycine receptor (TC 1.A.9.3) subfamily. GLRB sub-subfamily. As to quaternary structure, forms heteropentamers with glycin receptor alpha subunits. Heteropentamers with GLRA1 can be composed of two GLRA1 and three GLRB subunits, or three GLRA1 and two GLRB subunits, or four GLRA1 subunits and one GLRB subunit. Forms heteropentamers with GLRA2. Functional GLRB-GLRA2 heteropentamers contain four GLRA2 subunits and one GLRB subunit, although alternative subunit composition cannot be excluded. Forms a heteropentamer with GLRA3. Interacts with GPHN. As to expression, detected in spinal cord and brain stem (at protein level). Detected in spinal cord, cerebellum and brain cortex.

The protein resides in the postsynaptic cell membrane. The protein localises to the cell membrane. It is found in the synapse. Its subcellular location is the perikaryon. It localises to the cell projection. The protein resides in the dendrite. The protein localises to the cytoplasm. The catalysed reaction is chloride(in) = chloride(out). Its activity is regulated as follows. Channel opening is triggered by extracellular glycine. Heteropentameric channels composed of GLRB and GLRA1 are activated by lower glycine levels than homopentameric GLRA1. Subunit of heteromeric glycine-gated chloride channels. Plays an important role in the down-regulation of neuronal excitability. Contributes to the generation of inhibitory postsynaptic currents. The polypeptide is Glycine receptor subunit beta (Glrb) (Rattus norvegicus (Rat)).